We begin with the raw amino-acid sequence, 493 residues long: MSLRLTNTLTRRTEPFTPLTPGKASIYCCGVTVYDLCHLGHARSYINWDVLRRFLIWRGLEVTFVQNFTDIDDKILKRAAEQNSSMTEVSERNIDAFHQDMDALGILRPDRMPRATQCLDGIRSLIGELEAKGAAYSADGDVYFAVMKHAGYGKLSGRDLSEQQDNAAGRVADAEEARKQHPFDFALWKGAKPGEPSFPSPWGEGRPGWHIECSAMVRAELGDTIDIHLGGADLVFPHHENEIAQSEAATGKELARVWMHNGMVNVGGQKMSKSLGNFTTIRALLESGVSPMTLRLFVLQAHYRKPLDFTAEALEAAATGWKGLNAALGLGERYSDQLGWPSPAALSEDAIGPQTSPDAEALQALEQQFIGSMEDDLNSSGALAVLFDLAKPLRALANRLERGDEPGLPEADIRNLAPRWQLLRELAVVLGLRGETSGQSNMDDESIDATIAARKAAKAAKNYAEADRIRNELTAQGIELIDKPGGITEWIRS.

Zn(2+) is bound at residue Cys29. Residues 31–41 (VTVYDLCHLGH) carry the 'HIGH' region motif. 3 residues coordinate Zn(2+): Cys213, His238, and Glu242. The 'KMSKS' region motif lies at 270-274 (KMSKS). Lys273 is an ATP binding site.

Belongs to the class-I aminoacyl-tRNA synthetase family. Monomer. Zn(2+) serves as cofactor.

It localises to the cytoplasm. The enzyme catalyses tRNA(Cys) + L-cysteine + ATP = L-cysteinyl-tRNA(Cys) + AMP + diphosphate. This Parasynechococcus marenigrum (strain WH8102) protein is Cysteine--tRNA ligase.